The chain runs to 118 residues: Large ribosomal subunit protein bL19 (118 aa).

The protein belongs to the bacterial ribosomal protein bL19 family.

In terms of biological role, this protein is located at the 30S-50S ribosomal subunit interface and may play a role in the structure and function of the aminoacyl-tRNA binding site. The chain is Large ribosomal subunit protein bL19 from Aliarcobacter butzleri (strain RM4018) (Arcobacter butzleri).